The sequence spans 918 residues: Cell surface glycoprotein 1 (918 aa).

Positions 1–34 (MTDTNEKIRSLFLTALMVFSVFAGTIAFSGGAAA) are cleaved as a signal peptide. Asparagine 37, asparagine 56, asparagine 110, asparagine 219, asparagine 250, asparagine 261, and asparagine 291 each carry an N-linked (GlcNAc...) asparagine glycan. N-linked (GalNAc...) asparagine glycosylation occurs at asparagine 306. N-linked (GlcNAc...) asparagine glycans are attached at residues asparagine 318, asparagine 343, asparagine 392, asparagine 434, asparagine 487, asparagine 541, asparagine 555, asparagine 572, asparagine 585, asparagine 614, asparagine 715, asparagine 776, asparagine 836, and asparagine 845. Residues 815–894 (HQDTNGNEAY…DESETTAAEG (80 aa)) form a disordered region. Over residues 833 to 846 (YTQNGSAVTDSANV) the composition is skewed to polar residues. Residues 849-875 (VEEEQTEAPDTETETEAPDTETEEETD) are compositionally biased toward acidic residues. A helical transmembrane segment spans residues 894–914 (GPGFTAAIALIALVAAALLAV). The PGF sorting signal motif lies at 895–897 (PGF).

This sequence belongs to the halobacterial S-layer protein family. N-glycosylated on Asn-306; this N-linked glycan is a branched trisaccharide containing 2-amino-6-sulfo-2,6-dideoxy-glucose (sulfoquinovosamine). In terms of processing, cleaved by the archaeosortase ArtA at the C-terminus, with removal of a short hydrophobic segment. Post-translationally, lipidation.

The protein resides in the secreted. It localises to the cell wall. Its subcellular location is the S-layer. The protein localises to the cell membrane. Functionally, S-layer protein. The S-layer is a paracrystalline mono-layered assembly of proteins which coat the surface of the cell. In H.hispanica, the S-layer contains two different glycoproteins, Slg1 and Slg2, which share highly similar amino acid sequences. The sequence is that of Cell surface glycoprotein 1 from Haloarcula hispanica (strain ATCC 33960 / DSM 4426 / JCM 8911 / NBRC 102182 / NCIMB 2187 / VKM B-1755).